The chain runs to 214 residues: Transcriptional activator protein ExaE (214 aa).

In terms of domain architecture, Response regulatory spans 2–118 (GILLVDDHPM…VVLEAVRRVL (117 aa)). 4-aspartylphosphate is present on Asp-53. The region spanning 143-208 (GNARLQGLTQ…ELVHLAIEAG (66 aa)) is the HTH luxR-type domain. Residues 167-186 (TRLIAQQLCISAKTVSNYLT) constitute a DNA-binding region (H-T-H motif).

Its function is as follows. Positive regulator of the expression of the gene qedA and the activity of ADH I but does not affect the activities of ADH IIB or ADH IIG. This chain is Transcriptional activator protein ExaE, found in Pseudomonas putida (Arthrobacter siderocapsulatus).